The sequence spans 301 residues: Small ribosomal subunit protein uS3 (301 aa).

The KH type-2 domain maps to 39–107 (VREYLKAKLK…PVAVNIEEVR (69 aa)). The disordered stretch occupies residues 211-301 (GESPGAKLDA…AAAADGTKTE (91 aa)). The span at 224 to 244 (DEERKPRGPRRDARPGSDRPA) shows a compositional bias: basic and acidic residues. Positions 245 to 257 (PRGARAPRAPAGG) are enriched in low complexity.

The protein belongs to the universal ribosomal protein uS3 family. Part of the 30S ribosomal subunit. Forms a tight complex with proteins S10 and S14.

Functionally, binds the lower part of the 30S subunit head. Binds mRNA in the 70S ribosome, positioning it for translation. This is Small ribosomal subunit protein uS3 from Polaromonas sp. (strain JS666 / ATCC BAA-500).